Consider the following 40-residue polypeptide: Photosystem II reaction center protein J (40 aa).

A helical transmembrane segment spans residues isoleucine 8–phenylalanine 28.

This sequence belongs to the PsbJ family. In terms of assembly, PSII is composed of 1 copy each of membrane proteins PsbA, PsbB, PsbC, PsbD, PsbE, PsbF, PsbH, PsbI, PsbJ, PsbK, PsbL, PsbM, PsbT, PsbX, PsbY, PsbZ, Psb30/Ycf12, at least 3 peripheral proteins of the oxygen-evolving complex and a large number of cofactors. It forms dimeric complexes.

Its subcellular location is the plastid. It is found in the chloroplast thylakoid membrane. Its function is as follows. One of the components of the core complex of photosystem II (PSII). PSII is a light-driven water:plastoquinone oxidoreductase that uses light energy to abstract electrons from H(2)O, generating O(2) and a proton gradient subsequently used for ATP formation. It consists of a core antenna complex that captures photons, and an electron transfer chain that converts photonic excitation into a charge separation. This Huperzia lucidula (Shining clubmoss) protein is Photosystem II reaction center protein J.